We begin with the raw amino-acid sequence, 172 residues long: Myosin regulatory light chain 12B (172 aa).

A compositionally biased stretch (basic residues) spans 1 to 16 (MSSKKAKTKTTKKRPQ). The segment at 1–20 (MSSKKAKTKTTKKRPQRATS) is disordered. T19 carries the post-translational modification Phosphothreonine; by MLCK and ZIPK/DAPK3. The residue at position 20 (S20) is a Phosphoserine; by MLCK and ZIPK/DAPK3. 3 EF-hand domains span residues 29 to 64 (SQIQ…LGKN), 98 to 133 (DPED…MGDR), and 134 to 169 (FTDE…GAKD). Residues D42, N44, D46, and D53 each contribute to the Ca(2+) site.

Myosin is a hexamer of 2 heavy chains and 4 light chains: interacts with myosin heavy chain MYO19. In terms of processing, phosphorylation increases the actin-activated myosin ATPase activity and thereby regulates the contractile activity. It is required to generate the driving force in the migration of the cells but not necessary for localization of myosin-2 at the leading edge. Phosphorylation is reduced following epigallocatechin-3-O-gallate treatment. As to expression, ubiquitously expressed in various hematopoietic cells.

In terms of biological role, myosin regulatory subunit that plays an important role in regulation of both smooth muscle and nonmuscle cell contractile activity via its phosphorylation. Phosphorylation triggers actin polymerization in vascular smooth muscle. Implicated in cytokinesis, receptor capping, and cell locomotion. This chain is Myosin regulatory light chain 12B (MYL12B), found in Homo sapiens (Human).